Here is a 295-residue protein sequence, read N- to C-terminus: Craniofacial development protein 1 (295 aa).

2 stretches are compositionally biased toward acidic residues: residues 1–18 and 25–43; these read MEEF…DEDY and YSED…DGEE. 2 disordered regions span residues 1–153 and 188–217; these read MEEF…LDKP and FLKQ…IKRA. A compositionally biased stretch (basic residues) spans 49–65; it reads KGKRRKAQGIPARKRKQ. Phosphoserine is present on residues S80, S83, S84, and S112. K146 participates in a covalent cross-link: Glycyl lysine isopeptide (Lys-Gly) (interchain with G-Cter in SUMO2). Residues 174-213 are hydrophilic; that stretch reads VTKEVDAASKEAKSFLKQTEREKPQALVTSPATPLPAGSG. Residues 188-197 show a composition bias toward basic and acidic residues; sequence FLKQTEREKP. The residue at position 212 (S212) is a Phosphoserine. The region spanning 214 to 295 is the BCNT-C domain; that stretch reads IKRASGMSSL…RDLRLSKMKP (82 aa). K215 carries the post-translational modification N6-methyllysine. Position 246 is a phosphoserine (S246).

In terms of tissue distribution, expressed in lung, liver and heart, with higher expression in teeth.

The protein localises to the chromosome. It is found in the centromere. It localises to the kinetochore. Functionally, may play a role during embryogenesis. May modulate tooth organogenesis since alterations of this protein function affect tooth organs size as well as individual cell fate and survival. In embryonic cells, blockage of the function results in increased number of apoptotic cells, reduced proliferation, alterations in cell shape and fibronection matrix synthesis. This is Craniofacial development protein 1 (Cfdp1) from Mus musculus (Mouse).